The chain runs to 77 residues: Conotoxin King-Kong 1 (77 aa).

Positions methionine 1–alanine 22 are cleaved as a signal peptide. Positions aspartate 23 to asparagine 49 are excised as a propeptide. 3 disulfides stabilise this stretch: cysteine 52/cysteine 67, cysteine 59/cysteine 71, and cysteine 66/cysteine 76. Methionine 61 carries the post-translational modification Methionine sulfoxide; partial.

This sequence belongs to the conotoxin O1 superfamily. Expressed by the venom duct.

It is found in the secreted. In Conus textile (Cloth-of-gold cone), this protein is Conotoxin King-Kong 1.